Reading from the N-terminus, the 130-residue chain is Flagellar assembly factor FliW (130 aa).

The protein belongs to the FliW family. In terms of assembly, interacts with translational regulator CsrA and flagellin(s).

It localises to the cytoplasm. Its function is as follows. Acts as an anti-CsrA protein, binds CsrA and prevents it from repressing translation of its target genes, one of which is flagellin. Binds to flagellin and participates in the assembly of the flagellum. This is Flagellar assembly factor FliW from Clostridioides difficile (strain 630) (Peptoclostridium difficile).